Here is a 326-residue protein sequence, read N- to C-terminus: Ketol-acid reductoisomerase (NADP(+)) (326 aa).

The region spanning 1–180 is the KARI N-terminal Rossmann domain; that stretch reads MDIIHDNAAD…GLTRGGVLEC (180 aa). Residues 24-27, arginine 47, and serine 51 contribute to the NADP(+) site; that span reads YGAQ. The active site involves histidine 106. Glycine 132 contacts NADP(+). In terms of domain architecture, KARI C-terminal knotted spans 181–326; sequence TMAQETYEDL…AKIRSLFERN (146 aa). 4 residues coordinate Mg(2+): aspartate 189, glutamate 193, glutamate 225, and glutamate 229. Serine 250 serves as a coordination point for substrate.

The protein belongs to the ketol-acid reductoisomerase family. The cofactor is Mg(2+).

It carries out the reaction (2R)-2,3-dihydroxy-3-methylbutanoate + NADP(+) = (2S)-2-acetolactate + NADPH + H(+). It catalyses the reaction (2R,3R)-2,3-dihydroxy-3-methylpentanoate + NADP(+) = (S)-2-ethyl-2-hydroxy-3-oxobutanoate + NADPH + H(+). It participates in amino-acid biosynthesis; L-isoleucine biosynthesis; L-isoleucine from 2-oxobutanoate: step 2/4. Its pathway is amino-acid biosynthesis; L-valine biosynthesis; L-valine from pyruvate: step 2/4. Involved in the biosynthesis of branched-chain amino acids (BCAA). Catalyzes an alkyl-migration followed by a ketol-acid reduction of (S)-2-acetolactate (S2AL) to yield (R)-2,3-dihydroxy-isovalerate. In the isomerase reaction, S2AL is rearranged via a Mg-dependent methyl migration to produce 3-hydroxy-3-methyl-2-ketobutyrate (HMKB). In the reductase reaction, this 2-ketoacid undergoes a metal-dependent reduction by NADPH to yield (R)-2,3-dihydroxy-isovalerate. This Akkermansia muciniphila (strain ATCC BAA-835 / DSM 22959 / JCM 33894 / BCRC 81048 / CCUG 64013 / CIP 107961 / Muc) protein is Ketol-acid reductoisomerase (NADP(+)).